The sequence spans 113 residues: Large ribosomal subunit protein uL22 (113 aa).

It belongs to the universal ribosomal protein uL22 family. As to quaternary structure, part of the 50S ribosomal subunit.

In terms of biological role, this protein binds specifically to 23S rRNA; its binding is stimulated by other ribosomal proteins, e.g. L4, L17, and L20. It is important during the early stages of 50S assembly. It makes multiple contacts with different domains of the 23S rRNA in the assembled 50S subunit and ribosome. Functionally, the globular domain of the protein is located near the polypeptide exit tunnel on the outside of the subunit, while an extended beta-hairpin is found that lines the wall of the exit tunnel in the center of the 70S ribosome. The chain is Large ribosomal subunit protein uL22 from Herpetosiphon aurantiacus (strain ATCC 23779 / DSM 785 / 114-95).